Reading from the N-terminus, the 356-residue chain is DNA integrity scanning protein DisA (356 aa).

The 141-residue stretch at 7–147 (NKNMLYALKM…EKYVVEDISK (141 aa)) folds into the DAC domain. ATP contacts are provided by residues glycine 74, leucine 92, and 105 to 109 (TRHRT).

It belongs to the DisA family. Homooctamer. Mg(2+) serves as cofactor.

The enzyme catalyses 2 ATP = 3',3'-c-di-AMP + 2 diphosphate. In terms of biological role, participates in a DNA-damage check-point that is active prior to asymmetric division when DNA is damaged. DisA forms globular foci that rapidly scan along the chromosomes during sporulation, searching for lesions. When a lesion is present, DisA pauses at the lesion site. This triggers a cellular response that culminates in a temporary block in sporulation initiation. Its function is as follows. Also has diadenylate cyclase activity, catalyzing the condensation of 2 ATP molecules into cyclic di-AMP (c-di-AMP). c-di-AMP acts as a signaling molecule that couples DNA integrity with progression of sporulation. The rise in c-di-AMP level generated by DisA while scanning the chromosome, operates as a positive signal that advances sporulation; upon encountering a lesion, the DisA focus arrests at the damaged site and halts c-di-AMP synthesis. The chain is DNA integrity scanning protein DisA from Clostridioides difficile (strain 630) (Peptoclostridium difficile).